Reading from the N-terminus, the 483-residue chain is MASLLWGGDAGAAESERLNSHFSNLVHPRKNLRGIRSTTVPNIDGSLNTEEDDDEDDVVDLAANSLLNKLIRQSLVESSHRVEVLQKDPSSPLYSVKTFEELRLKEELLKGIYAMGFNRPSKIQEMALPMMLAHPPQNLIAQSQSGTGKTAAFVLAMLNRVNALELFPQCLCLAPTYELALQTGRVVERMGKFCVDVEVMYAIRGNRIPRGTDVTKQIVIGTPGTVLDWCFKRKLIDLTKIRVFVLDEADVMIDTQGFSDQSIRIQRALPSECQMLLFSATFEDSVWQFAERIIPDPNVIKLRKEELTLNNIRQYYVLCENRKDKYQALCNIYGGITIGQAIIFCQTRRNAKWLTVEMMQDGHQVSLLSGELTVEQRASIIQRFRDGKEKVLITTNVCARGIDVKQVTIVVNFDLPVNQSEEPDYETYLHRIGRTGRFGKKGLAFNMIEVDKLPLLMKIQDHFNSSIKQLDPEDMDEIEKIEY.

Position 49 is a phosphothreonine (threonine 49). Positions 61 to 74 (LAANSLLNKLIRQS) match the Nuclear export signal motif. A Q motif motif is present at residues 97-125 (KTFEELRLKEELLKGIYAMGFNRPSKIQE). A Nuclear localization signal motif is present at residues 100-114 (EELRLKEELLKGIYA). Residues 130–300 (MMLAHPPQNL…ERIIPDPNVI (171 aa)) form the Helicase ATP-binding domain. Position 143-150 (143-150 (SQSGTGKT)) interacts with ATP. A DEAD box motif is present at residues 247 to 250 (DEAD). Residues 311–478 (NIRQYYVLCE…QLDPEDMDEI (168 aa)) form the Helicase C-terminal domain.

It belongs to the DEAD box helicase family. Phosphorylated on threonine residues. The phosphorylated form is found in the cytoplasm but not in the nucleus. In terms of tissue distribution, isoform 1 is expressed in germ cells. Isoform 2 is highly expressed in Leydig cells and weakly expressed in the pituitary and hypothalamus. Isoform 3 is weakly expressed only in germ cells.

Its subcellular location is the cytoplasm. The protein localises to the nucleus. The enzyme catalyses ATP + H2O = ADP + phosphate + H(+). In terms of biological role, ATP-dependent RNA helicase. Required for mRNA export and translation regulation during spermatid development. The chain is ATP-dependent RNA helicase DDX25 (Ddx25) from Rattus norvegicus (Rat).